Consider the following 359-residue polypeptide: MSETSPKLRAELEGIPTYKPGKPAAAAGPVAYKLSSNENPYPPLPGVLESVASSVGSFNRYPDMACSGLMSELSERFGVPLSHLATGTGSVGVAQQLLQATSGPGDEVIYAWRSFEAYPIITQVSGATSVQVPLTPGDVHDLDAMADAITDRTRLIFVCNPNNPTGTVVRRAELERFLDRVPSDVLVVLDEAYREFIRDPEVPDGVAIYRERPNVCVLRTFSKAYGLAGLRVGFAIAHEPVAAALRKTAVPFGVSQLAQDAAVASLRAEDELLGRVGALVCERQRVVASLREQGWTVPETQANFVWLRLGERTLDFAAACEQAGVVVRPFAGEGVRVTVGENEANDIFLKVTERFRKEL.

At Lys-223 the chain carries N6-(pyridoxal phosphate)lysine.

This sequence belongs to the class-II pyridoxal-phosphate-dependent aminotransferase family. As to quaternary structure, homodimer. Pyridoxal 5'-phosphate is required as a cofactor.

The catalysed reaction is an aromatic L-alpha-amino acid + 2-oxoglutarate = an aromatic oxo-acid + L-glutamate. Its function is as follows. Aminotransferase that catalyzes the conversion of aromatic amino acids and 2-oxoglutarate into corresponding aromatic oxo acids and L-glutamate. The chain is Aromatic amino acid aminotransferase from Streptomyces avermitilis (strain ATCC 31267 / DSM 46492 / JCM 5070 / NBRC 14893 / NCIMB 12804 / NRRL 8165 / MA-4680).